The sequence spans 126 residues: uncharacterized protein (126 aa).

An HIT domain is found at 19–126; it reads IFERIIEGAV…LGGGLLGSIA (108 aa). The Histidine triad motif motif lies at 111-115; it reads HLHIH.

This is an uncharacterized protein from Chlamydia muridarum (strain MoPn / Nigg).